We begin with the raw amino-acid sequence, 154 residues long: UPF0178 protein GM21_2006 (154 aa).

The protein belongs to the UPF0178 family.

In Geobacter sp. (strain M21), this protein is UPF0178 protein GM21_2006.